The sequence spans 108 residues: Cytochrome c (108 aa).

Heme c contacts are provided by C19, C22, H23, and M85.

The protein belongs to the cytochrome c family. In terms of processing, binds 1 heme c group covalently per subunit.

Its subcellular location is the mitochondrion intermembrane space. Its function is as follows. Electron carrier protein. The oxidized form of the cytochrome c heme group can accept an electron from the heme group of the cytochrome c1 subunit of cytochrome reductase. Cytochrome c then transfers this electron to the cytochrome oxidase complex, the final protein carrier in the mitochondrial electron-transport chain. The protein is Cytochrome c of Cochliobolus lunatus (Filamentous fungus).